The sequence spans 338 residues: Ornithine carbamoyltransferase (338 aa).

Carbamoyl phosphate contacts are provided by residues 56-59 (STRT), Arg-107, and 134-137 (HPTQ). L-ornithine is bound by residues Asn-168, Asp-232, and 236 to 237 (SM). Carbamoyl phosphate is bound by residues 274–275 (CL) and Arg-320.

The protein belongs to the aspartate/ornithine carbamoyltransferase superfamily. OTCase family.

It is found in the cytoplasm. The enzyme catalyses carbamoyl phosphate + L-ornithine = L-citrulline + phosphate + H(+). The protein operates within amino-acid biosynthesis; L-arginine biosynthesis; L-arginine from L-ornithine and carbamoyl phosphate: step 1/3. Reversibly catalyzes the transfer of the carbamoyl group from carbamoyl phosphate (CP) to the N(epsilon) atom of ornithine (ORN) to produce L-citrulline. The sequence is that of Ornithine carbamoyltransferase (argI) from Buchnera aphidicola subsp. Acyrthosiphon pisum (strain APS) (Acyrthosiphon pisum symbiotic bacterium).